We begin with the raw amino-acid sequence, 271 residues long: Energy-coupling factor transporter ATP-binding protein EcfA (271 aa).

In terms of domain architecture, ABC transporter spans 2–231; sequence ISIQNLTFYY…PLFLQQYKLN (230 aa). 34–41 serves as a coordination point for ATP; sequence GHNGSGKS.

It belongs to the ABC transporter superfamily. Energy-coupling factor EcfA family. Forms a stable energy-coupling factor (ECF) transporter complex composed of 2 membrane-embedded substrate-binding proteins (S component), 2 ATP-binding proteins (A component) and 2 transmembrane proteins (T component).

The protein resides in the cell membrane. Its function is as follows. ATP-binding (A) component of a common energy-coupling factor (ECF) ABC-transporter complex. Unlike classic ABC transporters this ECF transporter provides the energy necessary to transport a number of different substrates. This is Energy-coupling factor transporter ATP-binding protein EcfA from Onion yellows phytoplasma (strain OY-M).